The chain runs to 247 residues: uncharacterized protein (247 aa).

2 consecutive transmembrane segments (helical) span residues 9–29 (IIAI…FLIF) and 37–57 (SYFL…SLII).

It localises to the cell membrane. This is an uncharacterized protein from Methanocaldococcus jannaschii (strain ATCC 43067 / DSM 2661 / JAL-1 / JCM 10045 / NBRC 100440) (Methanococcus jannaschii).